The chain runs to 271 residues: Formamidopyrimidine-DNA glycosylase (271 aa).

The active-site Schiff-base intermediate with DNA is Pro2. The active-site Proton donor is Glu3. The Proton donor; for beta-elimination activity role is filled by Lys56. 3 residues coordinate DNA: His89, Arg107, and Arg151. The segment at 236–270 (MVYDRAGLPCRVCAAPIKSIRQGQRSSFYCATCQK) adopts an FPG-type zinc-finger fold. Arg260 functions as the Proton donor; for delta-elimination activity in the catalytic mechanism.

Belongs to the FPG family. As to quaternary structure, monomer. Requires Zn(2+) as cofactor.

It carries out the reaction Hydrolysis of DNA containing ring-opened 7-methylguanine residues, releasing 2,6-diamino-4-hydroxy-5-(N-methyl)formamidopyrimidine.. The catalysed reaction is 2'-deoxyribonucleotide-(2'-deoxyribose 5'-phosphate)-2'-deoxyribonucleotide-DNA = a 3'-end 2'-deoxyribonucleotide-(2,3-dehydro-2,3-deoxyribose 5'-phosphate)-DNA + a 5'-end 5'-phospho-2'-deoxyribonucleoside-DNA + H(+). Involved in base excision repair of DNA damaged by oxidation or by mutagenic agents. Acts as a DNA glycosylase that recognizes and removes damaged bases. Has a preference for oxidized purines, such as 7,8-dihydro-8-oxoguanine (8-oxoG). Has AP (apurinic/apyrimidinic) lyase activity and introduces nicks in the DNA strand. Cleaves the DNA backbone by beta-delta elimination to generate a single-strand break at the site of the removed base with both 3'- and 5'-phosphates. In Polaromonas naphthalenivorans (strain CJ2), this protein is Formamidopyrimidine-DNA glycosylase.